The primary structure comprises 211 residues: Small ribosomal subunit protein uS3 (211 aa).

Residues 38 to 106 form the KH type-2 domain; it reads LRNFLKKRLY…EIYLNIQEVR (69 aa).

This sequence belongs to the universal ribosomal protein uS3 family. Part of the 30S ribosomal subunit. Forms a tight complex with proteins S10 and S14.

Its function is as follows. Binds the lower part of the 30S subunit head. Binds mRNA in the 70S ribosome, positioning it for translation. This is Small ribosomal subunit protein uS3 from Geobacter sulfurreducens (strain ATCC 51573 / DSM 12127 / PCA).